The chain runs to 522 residues: MGQAPSSPAEPNVRDTSLCLWSPEFLDCESIGFEDGDYDFTANLPDDCLAHIFQFLSAGDRKRCSLVSKRWLLVDGQNRHRLSLDAKSEILPFLPCIFNRFDSVTKLALRCDRRSFSLSDEALFIVSIRCSNLIRVKLRGCREITDLGMESFARNCKSLRKLSCGSCTFGAKGINAMLEHCKVLEELSLKRIRGLHELAEPIKLSLSASLRSVFLKELVNGQVFGSLVATRTLKKVKIIRCLGNWDRVFEMNGNGNSSLTEIRLERLQVTDIGLFGISKCSNLETLHIVKTPDCSNLGLASVVERCKLLRKLHIDGWRVKRIGDQGLMSVAKHCLNLQELVLIGVDATYMSLSAIASNCKKLERLALCGSGTIGDAEIGCIAEKCVTLRKFCIKGCLISDVGVQALALGCPKLVKLKVKKCSLVTGEVREWLRERRMTLVVSMDDDETNGVGLVDGGDQRVLETVVEEEAPPVIDGDGGLGVAGGGRLGLAILKTKLGLLAGRNLVACTLRRWSQSEATSSI.

The region spanning 38 to 84 (YDFTANLPDDCLAHIFQFLSAGDRKRCSLVSKRWLLVDGQNRHRLSL) is the F-box domain. 10 LRR repeats span residues 115–140 (SFSLSDEALFIVSIRCSNLIRVKLRG), 141–166 (CREITDLGMESFARNCKSLRKLSCGS), 169–191 (FGAKGINAMLEHCKVLEELSLKR), 266–290 (RLQVTDIGLFGISKCSNLETLHIVK), 291–316 (TPDCSNLGLASVVERCKLLRKLHIDG), 319–344 (VKRIGDQGLMSVAKHCLNLQELVLIG), 348–369 (TYMSLSAIASNCKKLERLALCG), 370–393 (SGTIGDAEIGCIAEKCVTLRKFCI), 395–420 (GCLISDVGVQALALGCPKLVKLKVKK), and 421–447 (CSLVTGEVREWLRERRMTLVVSMDDDE).

This chain is F-box/LRR-repeat protein 16 (FBL16), found in Arabidopsis thaliana (Mouse-ear cress).